We begin with the raw amino-acid sequence, 174 residues long: MTERPRDCRPVVRRARTSDVPAIKQLVDTYAGKILLEKNLVTLYEAVQEFWVAEHPDLYGKVVGCGALHVLWSDLGEIRTVAVDPAMTGHGIGHAIVDRLLQVARDLQLQRVFVLTFETEFFARHGFTEIEGTPVTAEVFDEMCRSYDIGVAEFLDLSYVKPNILGNSRMLLVL.

The N-acetyltransferase domain maps to 10–148; that stretch reads PVVRRARTSD…VFDEMCRSYD (139 aa).

Belongs to the acetyltransferase family. In terms of assembly, homodimer and homotetramer.

The catalysed reaction is L-glutamate + acetyl-CoA = N-acetyl-L-glutamate + CoA + H(+). Its pathway is amino-acid biosynthesis; L-arginine biosynthesis; N(2)-acetyl-L-ornithine from L-glutamate: step 1/4. With respect to regulation, inhibited by L-arginine. Functionally, catalyzes the conversion of L-glutamate to alpha-N-acetyl-L-glutamate. L-glutamine is a significantly better substrate compared to L-glutamate. This chain is Amino-acid acetyltransferase (argA), found in Mycobacterium tuberculosis (strain ATCC 25618 / H37Rv).